Here is a 641-residue protein sequence, read N- to C-terminus: Soluble starch synthase 1, chloroplastic/amyloplastic (641 aa).

Lysine 145 contacts ADP-alpha-D-glucose.

The protein belongs to the glycosyltransferase 1 family. Bacterial/plant glycogen synthase subfamily. As to expression, high expression in leaves and very low in tubers.

The protein resides in the plastid. It is found in the chloroplast. The protein localises to the amyloplast. The catalysed reaction is [(1-&gt;4)-alpha-D-glucosyl](n) + ADP-alpha-D-glucose = [(1-&gt;4)-alpha-D-glucosyl](n+1) + ADP + H(+). It functions in the pathway glycan biosynthesis; starch biosynthesis. Functionally, plays a minor role in starch synthesis in storage organs (tubers), but may contribute to the deposition of transient starch in chloroplasts of leaves. The polypeptide is Soluble starch synthase 1, chloroplastic/amyloplastic (Solanum tuberosum (Potato)).